The chain runs to 113 residues: U11-theraphotoxin-Hhn1a (113 aa).

The signal sequence occupies residues 1-21; sequence MNTVRVTFLLVFVLAVSLGRA. Positions 22–74 are excised as a propeptide; it reads DKDENRMEMQEKTEQGKSYLDFAENLLLQKLEELEAKLLEEDSEESRNSRQKR. 3 disulfides stabilise this stretch: C75–C90, C82–C95, and C89–C110.

Belongs to the neurotoxin 14 (magi-1) family. 01 (HNTX-16) subfamily. In terms of tissue distribution, expressed by the venom gland.

The protein localises to the secreted. Its function is as follows. Probable ion channel inhibitor. This is U11-theraphotoxin-Hhn1a from Cyriopagopus hainanus (Chinese bird spider).